Reading from the N-terminus, the 327-residue chain is L-lactate dehydrogenase (327 aa).

NAD(+) contacts are provided by residues V18, D39, K44, Y69, and 83 to 84; that span reads GA. Residues Q86, R92, and 124–127 each bind substrate; that span reads NPVD. Residues 122-124 and S147 each bind NAD(+); that span reads AAN. Substrate is bound at residue 152 to 155; that stretch reads DSAR. Positions 157 and 172 each coordinate beta-D-fructose 1,6-bisphosphate. The active-site Proton acceptor is the H179. Phosphotyrosine is present on Y224. Residue T233 coordinates substrate.

It belongs to the LDH/MDH superfamily. LDH family. Homotetramer.

It localises to the cytoplasm. It carries out the reaction (S)-lactate + NAD(+) = pyruvate + NADH + H(+). Its pathway is fermentation; pyruvate fermentation to lactate; (S)-lactate from pyruvate: step 1/1. Allosterically activated by fructose 1,6-bisphosphate (FBP). Catalyzes the conversion of lactate to pyruvate. The chain is L-lactate dehydrogenase from Streptococcus pyogenes serotype M3 (strain SSI-1).